The following is a 142-amino-acid chain: Large ribosomal subunit protein uL13 (142 aa).

It belongs to the universal ribosomal protein uL13 family. Part of the 50S ribosomal subunit.

This protein is one of the early assembly proteins of the 50S ribosomal subunit, although it is not seen to bind rRNA by itself. It is important during the early stages of 50S assembly. The chain is Large ribosomal subunit protein uL13 from Polaromonas sp. (strain JS666 / ATCC BAA-500).